Consider the following 284-residue polypeptide: Sulfotransferase 2A6 (284 aa).

43–48 contacts 3'-phosphoadenylyl sulfate; the sequence is KSGTNW. The active-site Proton acceptor is H98. Residues R120, S128, Y183, 217–222, and 246–248 contribute to the 3'-phosphoadenylyl sulfate site; these read SSFQVM and RNG.

The protein belongs to the sulfotransferase 1 family. As to quaternary structure, oligomer. As to expression, liver, exhibiting a sex-dependent spatial localization in the lobule of the liver.

It localises to the cytoplasm. The protein resides in the cytosol. It catalyses the reaction an alcohol + 3'-phosphoadenylyl sulfate = an alkyl sulfate + adenosine 3',5'-bisphosphate + H(+). The enzyme catalyses glycolithocholate + 3'-phosphoadenylyl sulfate = sulfoglycolithocholate + adenosine 3',5'-bisphosphate + H(+). The catalysed reaction is taurolithocholate + 3'-phosphoadenylyl sulfate = taurolithocholate 3-sulfate + adenosine 3',5'-bisphosphate + H(+). It carries out the reaction 3beta-hydroxyandrost-5-en-17-one + 3'-phosphoadenylyl sulfate = dehydroepiandrosterone 3-sulfate + adenosine 3',5'-bisphosphate + H(+). It catalyses the reaction 3beta-hydroxy-5-cholenate + 3'-phosphoadenylyl sulfate = 3beta-sulfo-5-cholenate + adenosine 3',5'-bisphosphate + H(+). The enzyme catalyses deoxycholate + 3'-phosphoadenylyl sulfate = 3alpha-sulfodeoxycholate + adenosine 3',5'-bisphosphate + H(+). The catalysed reaction is glycodeoxycholate + 3'-phosphoadenylyl sulfate = 3alpha-sulfoglycodeoxycholate + adenosine 3',5'-bisphosphate + H(+). It carries out the reaction taurodeoxycholate + 3'-phosphoadenylyl sulfate = 3alpha-sulfotaurodeoxycholate + adenosine 3',5'-bisphosphate + H(+). Its function is as follows. Sulfotransferase that utilizes 3'-phospho-5'-adenylyl sulfate (PAPS) as sulfonate donor to catalyze the sulfonation of the hydroxyl group of hydroxysteroids and bile acids. Prefered substrates are dehydroepiandrosterone (DHEA, also known as 3beta-hydroxyandrost-5-en-17-one) and 3beta-hydroxy-5-cholenoate, but can also catalyze deoxycholate and its conjugates, and lithocholate conjugates, in vitro. The chain is Sulfotransferase 2A6 from Rattus norvegicus (Rat).